A 392-amino-acid chain; its full sequence is ESX-1 secretion-associated protein EspA (392 aa).

A disordered region spans residues 302–392 (TRQALRPRAD…GQKVLVRNVV (91 aa)). The segment covering 334-344 (QGMGGPVGMGG) has biased composition (gly residues).

As to quaternary structure, homodimer; disulfide-linked.

The protein resides in the secreted. In terms of biological role, required for secretion of EsxA (ESAT-6) and EsxB (CFP-10) and for virulence. The chain is ESX-1 secretion-associated protein EspA from Mycobacterium tuberculosis (strain CDC 1551 / Oshkosh).